A 110-amino-acid chain; its full sequence is NAD(P)H-quinone oxidoreductase subunit M (110 aa).

It belongs to the complex I NdhM subunit family. As to quaternary structure, NDH-1 can be composed of about 15 different subunits; different subcomplexes with different compositions have been identified which probably have different functions.

The protein localises to the cellular thylakoid membrane. The enzyme catalyses a plastoquinone + NADH + (n+1) H(+)(in) = a plastoquinol + NAD(+) + n H(+)(out). It carries out the reaction a plastoquinone + NADPH + (n+1) H(+)(in) = a plastoquinol + NADP(+) + n H(+)(out). In terms of biological role, NDH-1 shuttles electrons from an unknown electron donor, via FMN and iron-sulfur (Fe-S) centers, to quinones in the respiratory and/or the photosynthetic chain. The immediate electron acceptor for the enzyme in this species is believed to be plastoquinone. Couples the redox reaction to proton translocation, and thus conserves the redox energy in a proton gradient. Cyanobacterial NDH-1 also plays a role in inorganic carbon-concentration. The protein is NAD(P)H-quinone oxidoreductase subunit M of Synechococcus elongatus (strain ATCC 33912 / PCC 7942 / FACHB-805) (Anacystis nidulans R2).